The chain runs to 198 residues: NADH-quinone oxidoreductase subunit C (198 aa).

Belongs to the complex I 30 kDa subunit family. NDH-1 is composed of 14 different subunits. Subunits NuoB, C, D, E, F, and G constitute the peripheral sector of the complex.

It localises to the cell inner membrane. The catalysed reaction is a quinone + NADH + 5 H(+)(in) = a quinol + NAD(+) + 4 H(+)(out). Functionally, NDH-1 shuttles electrons from NADH, via FMN and iron-sulfur (Fe-S) centers, to quinones in the respiratory chain. The immediate electron acceptor for the enzyme in this species is believed to be ubiquinone. Couples the redox reaction to proton translocation (for every two electrons transferred, four hydrogen ions are translocated across the cytoplasmic membrane), and thus conserves the redox energy in a proton gradient. The protein is NADH-quinone oxidoreductase subunit C of Chromobacterium violaceum (strain ATCC 12472 / DSM 30191 / JCM 1249 / CCUG 213 / NBRC 12614 / NCIMB 9131 / NCTC 9757 / MK).